Here is a 300-residue protein sequence, read N- to C-terminus: Probable endonuclease 4 (300 aa).

9 residues coordinate Zn(2+): histidine 68, histidine 109, glutamate 144, aspartate 178, histidine 181, histidine 213, aspartate 226, histidine 228, and glutamate 258.

Belongs to the AP endonuclease 2 family. The cofactor is Zn(2+).

The enzyme catalyses Endonucleolytic cleavage to 5'-phosphooligonucleotide end-products.. Endonuclease IV plays a role in DNA repair. It cleaves phosphodiester bonds at apurinic or apyrimidinic (AP) sites, generating a 3'-hydroxyl group and a 5'-terminal sugar phosphate. This chain is Probable endonuclease 4, found in Latilactobacillus sakei subsp. sakei (strain 23K) (Lactobacillus sakei subsp. sakei).